A 158-amino-acid polypeptide reads, in one-letter code: Transcription elongation factor GreA (158 aa).

This sequence belongs to the GreA/GreB family.

In terms of biological role, necessary for efficient RNA polymerase transcription elongation past template-encoded arresting sites. The arresting sites in DNA have the property of trapping a certain fraction of elongating RNA polymerases that pass through, resulting in locked ternary complexes. Cleavage of the nascent transcript by cleavage factors such as GreA or GreB allows the resumption of elongation from the new 3'terminus. GreA releases sequences of 2 to 3 nucleotides. The sequence is that of Transcription elongation factor GreA from Wigglesworthia glossinidia brevipalpis.